We begin with the raw amino-acid sequence, 134 residues long: MGLTYQLLPALVCLLACTSFIQGCKYDITLQEIIKTLNLTDGKGKNSCMELTVADAFGPKNTDGKEICRAAKVLQQYKRHDRSLIKECLSGLDRNLKGMANGTCCTVNEAKKSTLKDFLERLKTIMKEKYSKCS.

The first 23 residues, 1–23 (MGLTYQLLPALVCLLACTSFIQG), serve as a signal peptide directing secretion. Intrachain disulfides connect cysteine 24–cysteine 133 and cysteine 48–cysteine 88. Residue asparagine 38 is glycosylated (N-linked (GlcNAc...) asparagine). Asparagine 101 carries an N-linked (GlcNAc...) asparagine glycan.

This sequence belongs to the IL-4/IL-13 family.

The protein resides in the secreted. In terms of biological role, participates in at least several B-cell activation processes as well as of other cell types. It is a costimulator of DNA-synthesis. It induces the expression of class II MHC molecules on resting B-cells. It enhances both secretion and cell surface expression of IgE and IgG1. It also regulates the expression of the low affinity Fc receptor for IgE (CD23) on both lymphocytes and monocytes. Positively regulates IL31RA expression in macrophages. Stimulates autophagy in dendritic cells by interfering with mTORC1 signaling and through the induction of RUFY4. In Equus caballus (Horse), this protein is Interleukin-4 (IL4).